Consider the following 199-residue polypeptide: Chaperone protein TorD (199 aa).

The protein belongs to the TorD/DmsD family. TorD subfamily.

It is found in the cytoplasm. Its function is as follows. Involved in the biogenesis of TorA. Acts on TorA before the insertion of the molybdenum cofactor and, as a result, probably favors a conformation of the apoenzyme that is competent for acquiring the cofactor. The protein is Chaperone protein TorD of Escherichia coli O8 (strain IAI1).